The sequence spans 320 residues: o-succinylbenzoate synthase (320 aa).

The Proton donor role is filled by lysine 133. Mg(2+)-binding residues include aspartate 161, glutamate 190, and aspartate 213. Catalysis depends on lysine 235, which acts as the Proton acceptor.

It belongs to the mandelate racemase/muconate lactonizing enzyme family. MenC type 1 subfamily. The cofactor is a divalent metal cation.

The enzyme catalyses (1R,6R)-6-hydroxy-2-succinyl-cyclohexa-2,4-diene-1-carboxylate = 2-succinylbenzoate + H2O. The protein operates within quinol/quinone metabolism; 1,4-dihydroxy-2-naphthoate biosynthesis; 1,4-dihydroxy-2-naphthoate from chorismate: step 4/7. Its pathway is quinol/quinone metabolism; menaquinone biosynthesis. Its function is as follows. Converts 2-succinyl-6-hydroxy-2,4-cyclohexadiene-1-carboxylate (SHCHC) to 2-succinylbenzoate (OSB). The polypeptide is o-succinylbenzoate synthase (Escherichia coli O45:K1 (strain S88 / ExPEC)).